Consider the following 331-residue polypeptide: N-acetyl-alpha-D-glucosaminyl-diphospho-ditrans,octacis-undecaprenol 4-epimerase (331 aa).

NAD(+)-binding positions include 13–14 (FV), 34–39 (QQSHFY), 47–48 (DV), S109, Y132, and K136. Substrate-binding residues include S109 and Y132. Y132 acts as the Proton acceptor in catalysis. Substrate is bound by residues 183-184 (GK) and 199-201 (YVG).

Belongs to the NAD(P)-dependent epimerase/dehydratase family. NAD(+) serves as cofactor.

It localises to the cell membrane. The catalysed reaction is N-acetyl-alpha-D-glucosaminyl-di-trans,octa-cis-undecaprenyl diphosphate = N-acetyl-alpha-D-galactosaminyl-di-trans,octa-cis-undecaprenyl diphosphate. Its pathway is bacterial outer membrane biogenesis; LPS O-antigen biosynthesis. Its function is as follows. Involved in biosynthesis of the repeating tetrasaccharide unit of the O-antigen. Catalyzes the reversible epimerization of the hydroxyl group at position C4 of undecaprenyl pyrophosphate-N-acetylglucosamine (UndPP-GlcNAc) to yield undecaprenyl pyrophosphate-N-acetylgalactosamine (UndPP-GalNAc). The chain is N-acetyl-alpha-D-glucosaminyl-diphospho-ditrans,octacis-undecaprenol 4-epimerase from Escherichia coli O157:H7.